Consider the following 505-residue polypeptide: ATP synthase subunit alpha (505 aa).

G172–T179 contacts ATP.

Belongs to the ATPase alpha/beta chains family. As to quaternary structure, F-type ATPases have 2 components, CF(1) - the catalytic core - and CF(0) - the membrane proton channel. CF(1) has five subunits: alpha(3), beta(3), gamma(1), delta(1), epsilon(1). CF(0) has three main subunits: a(1), b(2) and c(9-12). The alpha and beta chains form an alternating ring which encloses part of the gamma chain. CF(1) is attached to CF(0) by a central stalk formed by the gamma and epsilon chains, while a peripheral stalk is formed by the delta and b chains.

It localises to the cell inner membrane. It carries out the reaction ATP + H2O + 4 H(+)(in) = ADP + phosphate + 5 H(+)(out). Produces ATP from ADP in the presence of a proton gradient across the membrane. The alpha chain is a regulatory subunit. The chain is ATP synthase subunit alpha from Syntrophobacter fumaroxidans (strain DSM 10017 / MPOB).